A 426-amino-acid chain; its full sequence is Serine/threonine-protein kinase ssn3 (426 aa).

A Protein kinase domain is found at 39 to 368 (YHIVGFISSG…AKEALEHPYF (330 aa)). ATP is bound by residues 45-53 (ISSGTYGRV) and lysine 69. Aspartate 171 (proton acceptor) is an active-site residue. A compositionally biased stretch (basic and acidic residues) spans 389-398 (RRITHDDNDI). The tract at residues 389 to 426 (RRITHDDNDIRSGSLPGTKRSGLPDDSLMSRAAKRMKE) is disordered.

This sequence belongs to the protein kinase superfamily. CMGC Ser/Thr protein kinase family. CDC2/CDKX subfamily. As to quaternary structure, component of the srb8-11 complex, a regulatory module of the Mediator complex. Requires Mg(2+) as cofactor.

Its subcellular location is the nucleus. The catalysed reaction is L-seryl-[protein] + ATP = O-phospho-L-seryl-[protein] + ADP + H(+). It catalyses the reaction L-threonyl-[protein] + ATP = O-phospho-L-threonyl-[protein] + ADP + H(+). It carries out the reaction [DNA-directed RNA polymerase] + ATP = phospho-[DNA-directed RNA polymerase] + ADP + H(+). Its function is as follows. Component of the srb8-11 complex. The srb8-11 complex is a regulatory module of the Mediator complex which is itself involved in regulation of basal and activated RNA polymerase II-dependent transcription. The srb8-11 complex may be involved in the transcriptional repression of a subset of genes regulated by Mediator. It may inhibit the association of the Mediator complex with RNA polymerase II to form the holoenzyme complex. The srb8-11 complex phosphorylates the C-terminal domain (CTD) of the largest subunit of RNA polymerase II. The polypeptide is Serine/threonine-protein kinase ssn3 (ssn3) (Emericella nidulans (strain FGSC A4 / ATCC 38163 / CBS 112.46 / NRRL 194 / M139) (Aspergillus nidulans)).